A 71-amino-acid chain; its full sequence is Small ribosomal subunit protein bS21 (71 aa).

The segment covering 48–59 (KAAAAVKRHAKK) has biased composition (basic residues). The tract at residues 48-71 (KAAAAVKRHAKKVQREQRRRERLY) is disordered. The span at 60–71 (VQREQRRRERLY) shows a compositional bias: basic and acidic residues.

Belongs to the bacterial ribosomal protein bS21 family.

The sequence is that of Small ribosomal subunit protein bS21 from Azotobacter vinelandii (strain DJ / ATCC BAA-1303).